The chain runs to 217 residues: Large ribosomal subunit protein uL3 (217 aa).

This sequence belongs to the universal ribosomal protein uL3 family. In terms of assembly, part of the 50S ribosomal subunit. Forms a cluster with proteins L14 and L19.

In terms of biological role, one of the primary rRNA binding proteins, it binds directly near the 3'-end of the 23S rRNA, where it nucleates assembly of the 50S subunit. The sequence is that of Large ribosomal subunit protein uL3 from Mycolicibacterium paratuberculosis (strain ATCC BAA-968 / K-10) (Mycobacterium paratuberculosis).